Here is a 481-residue protein sequence, read N- to C-terminus: ATP synthase subunit beta, chloroplastic (481 aa).

162–169 (GGAGVGKT) lines the ATP pocket.

This sequence belongs to the ATPase alpha/beta chains family. In terms of assembly, F-type ATPases have 2 components, CF(1) - the catalytic core - and CF(0) - the membrane proton channel. CF(1) has five subunits: alpha(3), beta(3), gamma(1), delta(1), epsilon(1). CF(0) has four main subunits: a(1), b(1), b'(1) and c(9-12).

The protein resides in the plastid. It is found in the chloroplast thylakoid membrane. The enzyme catalyses ATP + H2O + 4 H(+)(in) = ADP + phosphate + 5 H(+)(out). Its function is as follows. Produces ATP from ADP in the presence of a proton gradient across the membrane. The catalytic sites are hosted primarily by the beta subunits. The chain is ATP synthase subunit beta, chloroplastic from Chlorella vulgaris (Green alga).